Here is a 300-residue protein sequence, read N- to C-terminus: Spermatogenesis-associated serine-rich protein 1 (300 aa).

The span at 1 to 10 shows a compositional bias: polar residues; the sequence is MSPSMLTGNS. Disordered regions lie at residues 1-42 and 64-91; these read MSPS…MTEV and TPSGKSVSSSSSVETGPSVSEPPGLPRV. Positions 27–42 are enriched in basic and acidic residues; the sequence is QLEKVPEKRDSGMTEV. Low complexity predominate over residues 64–85; it reads TPSGKSVSSSSSVETGPSVSEP. Ser-113 is modified (phosphoserine).

In Homo sapiens (Human), this protein is Spermatogenesis-associated serine-rich protein 1 (SPATS1).